Reading from the N-terminus, the 188-residue chain is Elongation factor P (188 aa).

It belongs to the elongation factor P family.

It localises to the cytoplasm. Its pathway is protein biosynthesis; polypeptide chain elongation. Its function is as follows. Involved in peptide bond synthesis. Stimulates efficient translation and peptide-bond synthesis on native or reconstituted 70S ribosomes in vitro. Probably functions indirectly by altering the affinity of the ribosome for aminoacyl-tRNA, thus increasing their reactivity as acceptors for peptidyl transferase. The chain is Elongation factor P from Caulobacter vibrioides (strain ATCC 19089 / CIP 103742 / CB 15) (Caulobacter crescentus).